A 405-amino-acid polypeptide reads, in one-letter code: L-carnitine CoA-transferase (405 aa).

CoA-binding residues include Lys97 and Arg104. The active-site Nucleophile is Asp169.

Belongs to the CoA-transferase III family. CaiB subfamily. As to quaternary structure, homodimer.

The protein resides in the cytoplasm. It carries out the reaction crotonobetainyl-CoA + (R)-carnitine = crotonobetaine + (R)-carnitinyl-CoA. The catalysed reaction is 4-(trimethylamino)butanoyl-CoA + (R)-carnitine = (R)-carnitinyl-CoA + 4-(trimethylamino)butanoate. Its pathway is amine and polyamine metabolism; carnitine metabolism. Catalyzes the reversible transfer of the CoA moiety from gamma-butyrobetainyl-CoA to L-carnitine to generate L-carnitinyl-CoA and gamma-butyrobetaine. Is also able to catalyze the reversible transfer of the CoA moiety from gamma-butyrobetainyl-CoA or L-carnitinyl-CoA to crotonobetaine to generate crotonobetainyl-CoA. In Salmonella enteritidis PT4 (strain P125109), this protein is L-carnitine CoA-transferase.